Consider the following 218-residue polypeptide: LexA repressor (218 aa).

Residues Arg28–Arg48 constitute a DNA-binding region (H-T-H motif). Catalysis depends on for autocatalytic cleavage activity residues Ser136 and Lys173.

This sequence belongs to the peptidase S24 family. As to quaternary structure, homodimer.

The catalysed reaction is Hydrolysis of Ala-|-Gly bond in repressor LexA.. Functionally, represses a number of genes involved in the response to DNA damage (SOS response), including recA and lexA. In the presence of single-stranded DNA, RecA interacts with LexA causing an autocatalytic cleavage which disrupts the DNA-binding part of LexA, leading to derepression of the SOS regulon and eventually DNA repair. This Cupriavidus metallidurans (strain ATCC 43123 / DSM 2839 / NBRC 102507 / CH34) (Ralstonia metallidurans) protein is LexA repressor.